The primary structure comprises 106 residues: UPF0060 membrane protein RL1530 (106 aa).

The next 4 membrane-spanning stretches (helical) occupy residues 4–24 (IIFA…WAWL), 30–50 (VWWL…LTLV), 58–78 (TFAA…WLVE), and 86–106 (DIGG…APRG).

This sequence belongs to the UPF0060 family.

It is found in the cell inner membrane. This Rhizobium johnstonii (strain DSM 114642 / LMG 32736 / 3841) (Rhizobium leguminosarum bv. viciae) protein is UPF0060 membrane protein RL1530.